We begin with the raw amino-acid sequence, 45 residues long: Natriuretic peptide OsNP-d (45 aa).

Positions Pro1–Leu5 are excised as a propeptide. Cys14 and Cys30 are disulfide-bonded.

The protein belongs to the natriuretic peptide family. As to expression, expressed by the venom gland.

It is found in the secreted. Functionally, snake venom natriuretic peptide that targets both NPR1 and NPR2. Exhibits hypotensive and vasodepressor activities. The protein is Natriuretic peptide OsNP-d of Oxyuranus scutellatus scutellatus (Australian taipan).